Reading from the N-terminus, the 389-residue chain is 5-hydroxytryptamine receptor 1B (389 aa).

Topologically, residues 1–45 (MGNPEASCTPPAVLGSQTGLPHANVSAPPNNCSAPSHIYQDSIAL) are extracellular. 2 N-linked (GlcNAc...) asparagine glycosylation sites follow: Asn24 and Asn31. A helical transmembrane segment spans residues 46 to 71 (PWKVLLVVLLALITLATTLSNAFVIA). Residues 72 to 85 (TVYRTRKLHTPANY) are Cytoplasmic-facing. A helical transmembrane segment spans residues 86–110 (LIASLAFTDLLVSILVMPISTMYTV). The Extracellular segment spans residues 111–118 (TGRWTLGQ). A helical membrane pass occupies residues 119–144 (ALCDFWLSSDITCCTASIMHLCVIAL). The cysteines at positions 121 and 198 are disulfide-linked. Ergotamine contacts are provided by Asp128 and Thr133. The short motif at 145–147 (DRY) is the DRY motif; important for ligand-induced conformation changes and signaling element. Over 145 to 164 (DRYWAITDAVGYSAKRTPRR) the chain is Cytoplasmic. Residues 165–183 (AAGMIALVWVFSICISLPP) form a helical membrane-spanning segment. The Extracellular segment spans residues 184-204 (FFWRQAKAEEEVLDCLVNTDH). Val200 is an ergotamine binding site. The helical transmembrane segment at 205 to 228 (VLYTVYSTGGAFYLPTLLLIALYG) threads the bilayer. Topologically, residues 229–314 (RIYVEARSRI…AARERKATKT (86 aa)) are cytoplasmic. A helical transmembrane segment spans residues 315-336 (LGVILGAFIVCWLPFFIISLVM). At 337 to 346 (PICKDACWFH) the chain is on the extracellular side. The helical transmembrane segment at 347–369 (MAIFDFFTWLGYLNSLINPIIYT) threads the bilayer. An NPxxY motif; important for ligand-induced conformation changes and signaling motif is present at residues 364–368 (NPIIY). The Cytoplasmic portion of the chain corresponds to 370–389 (MSNEDFKQAFHKLIRFKCTT). The S-palmitoyl cysteine moiety is linked to residue Cys387.

This sequence belongs to the G-protein coupled receptor 1 family. Homodimer. Heterodimer with HTR1D. Phosphorylated. Desensitization of the receptor may be mediated by its phosphorylation. In terms of processing, palmitoylated.

Its subcellular location is the cell membrane. G-protein coupled receptor for 5-hydroxytryptamine (serotonin). Also functions as a receptor for ergot alkaloid derivatives, various anxiolytic and antidepressant drugs and other psychoactive substances, such as lysergic acid diethylamide (LSD). Ligand binding causes a conformation change that triggers signaling via guanine nucleotide-binding proteins (G proteins) and modulates the activity of downstream effectors, such as adenylate cyclase. HTR1B is coupled to G(i)/G(o) G alpha proteins and mediates inhibitory neurotransmission by inhibiting adenylate cyclase activity. Arrestin family members inhibit signaling via G proteins and mediate activation of alternative signaling pathways. Regulates the release of 5-hydroxytryptamine, dopamine and acetylcholine in the brain, and thereby affects neural activity, nociceptive processing, pain perception, mood and behavior. Besides, plays a role in vasoconstriction of cerebral arteries. This chain is 5-hydroxytryptamine receptor 1B (HTR1B), found in Cavia porcellus (Guinea pig).